The chain runs to 247 residues: Segregation and condensation protein A (247 aa).

This sequence belongs to the ScpA family. Component of a cohesin-like complex composed of ScpA, ScpB and the Smc homodimer, in which ScpA and ScpB bind to the head domain of Smc. The presence of the three proteins is required for the association of the complex with DNA.

The protein resides in the cytoplasm. Participates in chromosomal partition during cell division. May act via the formation of a condensin-like complex containing Smc and ScpB that pull DNA away from mid-cell into both cell halves. The sequence is that of Segregation and condensation protein A from Caldanaerobacter subterraneus subsp. tengcongensis (strain DSM 15242 / JCM 11007 / NBRC 100824 / MB4) (Thermoanaerobacter tengcongensis).